A 147-amino-acid chain; its full sequence is MVHLTGEEKAAVTALWGKVNVDEVGGEALGRLLVVYPWTQRFFDSFGDLSSPDAVMNNPKVKAHGKKVLGAFSDGLAHLDNLKGTFAQLSELHCDKLHVXPENFRLLGNVLVCVLAHHFGKEFTPQVQAAYQKVVAGVANALAHKYH.

The residue at position 2 (Val-2) is an N-acetylvaline. The region spanning 3–147 (HLTGEEKAAV…VANALAHKYH (145 aa)) is the Globin domain. The residue at position 13 (Thr-13) is a Phosphothreonine. Phosphoserine is present on Ser-45. Position 60 is an N6-acetyllysine (Lys-60). His-64 is a binding site for heme b. The residue at position 83 (Lys-83) is an N6-acetyllysine. Residue His-93 participates in heme b binding. The residue at position 94 (Cys-94) is an S-nitrosocysteine. Residue Lys-145 is modified to N6-acetyllysine.

It belongs to the globin family. In terms of assembly, heterotetramer of two alpha chains and two beta chains. Red blood cells.

Functionally, involved in oxygen transport from the lung to the various peripheral tissues. This is Hemoglobin subunit beta (HBB) from Aotus azarae (Azara's night monkey).